A 351-amino-acid polypeptide reads, in one-letter code: Peptide chain release factor 1 (351 aa).

Q229 bears the N5-methylglutamine mark.

The protein belongs to the prokaryotic/mitochondrial release factor family. Post-translationally, methylated by PrmC. Methylation increases the termination efficiency of RF1.

Its subcellular location is the cytoplasm. Its function is as follows. Peptide chain release factor 1 directs the termination of translation in response to the peptide chain termination codons UAG and UAA. The polypeptide is Peptide chain release factor 1 (Ruegeria pomeroyi (strain ATCC 700808 / DSM 15171 / DSS-3) (Silicibacter pomeroyi)).